The primary structure comprises 348 residues: Propane 2-monooxygenase, reductase component (348 aa).

In terms of domain architecture, 2Fe-2S ferredoxin-type spans 5-95 (HKINFDPVDI…DCTIELLNFD (91 aa)). The [2Fe-2S] cluster site is built by Cys-39, Cys-44, Cys-47, and Cys-79. Positions 105–206 (IQDVRTQVQA…TGPYGSFTLK (102 aa)) constitute an FAD-binding FR-type domain.

The protein belongs to the bacterial ring-hydroxylating dioxygenase ferredoxin reductase family. In terms of assembly, the propane 2-monooxygenase multicomponent enzyme system is composed of an electron transfer component and a monooxygenase component interacting with the effector protein MimD. The electron transfer component is composed of a reductase (MimB), and the monooxygenase component is formed by a large subunit (MimA) and a small subunit (MimC). FAD serves as cofactor. [2Fe-2S] cluster is required as a cofactor.

In terms of biological role, reductase component of the propane 2-monooxygenase multicomponent enzyme system which is involved in the degradation of propane via the O2-dependent hydroxylation of propane. Reductase catalyzes the transfer of electrons from NADH or NADPH to monooxygenase. This chain is Propane 2-monooxygenase, reductase component, found in Mycolicibacterium smegmatis (strain ATCC 700084 / mc(2)155) (Mycobacterium smegmatis).